Here is a 564-residue protein sequence, read N- to C-terminus: Proline--tRNA ligase (564 aa).

It belongs to the class-II aminoacyl-tRNA synthetase family. ProS type 1 subfamily. Homodimer.

It is found in the cytoplasm. The catalysed reaction is tRNA(Pro) + L-proline + ATP = L-prolyl-tRNA(Pro) + AMP + diphosphate. Functionally, catalyzes the attachment of proline to tRNA(Pro) in a two-step reaction: proline is first activated by ATP to form Pro-AMP and then transferred to the acceptor end of tRNA(Pro). As ProRS can inadvertently accommodate and process non-cognate amino acids such as alanine and cysteine, to avoid such errors it has two additional distinct editing activities against alanine. One activity is designated as 'pretransfer' editing and involves the tRNA(Pro)-independent hydrolysis of activated Ala-AMP. The other activity is designated 'posttransfer' editing and involves deacylation of mischarged Ala-tRNA(Pro). The misacylated Cys-tRNA(Pro) is not edited by ProRS. The polypeptide is Proline--tRNA ligase (Coxiella burnetii (strain RSA 331 / Henzerling II)).